The following is a 158-amino-acid chain: Cyclic pyranopterin monophosphate synthase (158 aa).

Residues 75–77 (LCH) and 113–114 (ME) contribute to the substrate site. The active site involves D128.

Belongs to the MoaC family. In terms of assembly, homohexamer; trimer of dimers.

The enzyme catalyses (8S)-3',8-cyclo-7,8-dihydroguanosine 5'-triphosphate = cyclic pyranopterin phosphate + diphosphate. The protein operates within cofactor biosynthesis; molybdopterin biosynthesis. Functionally, catalyzes the conversion of (8S)-3',8-cyclo-7,8-dihydroguanosine 5'-triphosphate to cyclic pyranopterin monophosphate (cPMP). The sequence is that of Cyclic pyranopterin monophosphate synthase from Roseiflexus castenholzii (strain DSM 13941 / HLO8).